A 398-amino-acid polypeptide reads, in one-letter code: Phosphoglycerate kinase (398 aa).

Residues 23 to 25 (DFN), Arg-38, 61 to 64 (HMGK), Arg-122, and Arg-155 contribute to the substrate site. ATP is bound by residues Lys-206, Gly-297, Glu-328, and 354–357 (GGDS).

It belongs to the phosphoglycerate kinase family. As to quaternary structure, monomer.

It localises to the cytoplasm. The enzyme catalyses (2R)-3-phosphoglycerate + ATP = (2R)-3-phospho-glyceroyl phosphate + ADP. The protein operates within carbohydrate degradation; glycolysis; pyruvate from D-glyceraldehyde 3-phosphate: step 2/5. The chain is Phosphoglycerate kinase from Clostridium botulinum (strain Hall / ATCC 3502 / NCTC 13319 / Type A).